A 65-amino-acid polypeptide reads, in one-letter code: MPKIKTVRGAAKRFKKTGSGGFKRKHANLRHILTKKATKRKRHLRPKGMVSKNDMVLVVACLPYA.

The segment at 1–22 (MPKIKTVRGAAKRFKKTGSGGF) is disordered. Basic residues predominate over residues 10-22 (AAKRFKKTGSGGF).

This sequence belongs to the bacterial ribosomal protein bL35 family.

The polypeptide is Large ribosomal subunit protein bL35 (Serratia proteamaculans (strain 568)).